A 115-amino-acid polypeptide reads, in one-letter code: Cytochrome c (115 aa).

Heme c contacts are provided by Cys26, Cys29, His30, and Met91.

This sequence belongs to the cytochrome c family. Post-translationally, binds 1 heme c group covalently per subunit.

Its subcellular location is the mitochondrion intermembrane space. Functionally, electron carrier protein. The oxidized form of the cytochrome c heme group can accept an electron from the heme group of the cytochrome c1 subunit of cytochrome reductase. Cytochrome c then transfers this electron to the cytochrome oxidase complex, the final protein carrier in the mitochondrial electron-transport chain. The chain is Cytochrome c from Theileria parva (East coast fever infection agent).